The sequence spans 76 residues: Precursor of CEP7 (76 aa).

The signal sequence occupies residues M1–G27. A propeptide spanning residues R28–D61 is cleaved from the precursor. 2 N-linked (GlcNAc...) asparagine glycosylation sites follow: N37 and N48. Residues L49–H76 are disordered. Residues P65, P68, and P72 each carry the hydroxyproline modification.

The protein belongs to the C-terminally encoded plant signaling peptide (CEP) family. As to quaternary structure, interacts with CEP receptors (e.g. CEPR1 and CEPR2). Post-translationally, the mature small signaling peptide is generated by proteolytic processing of the longer precursor.

The protein localises to the secreted. It localises to the extracellular space. It is found in the apoplast. Its function is as follows. Extracellular signaling peptide that may regulate primary root growth rate and systemic nitrogen (N)-demand signaling. Mediates up-regulation of genes involved in N uptake and assimilation pathways. In Arabidopsis thaliana (Mouse-ear cress), this protein is Precursor of CEP7.